A 393-amino-acid chain; its full sequence is MSLPLTRKDLMIVNMGPQHPSMHGVLRLIVTLDGEDVIDCEPILGYLHRGMEKIAENRTIIQYLPYVTRWDYLATMFTEAITVNAPEFLENIQIPQRASYIRVIMLELSRIASHLLWLGPFMADLGAQTPFFYIFRERELIYDLFEAATGMRMMHNYFRIGGVAADLPYGWIDKCLDFCDYFLRGVVEYQQLITQNPIFLERVEGVGFISGEEAVNWGLSGPMLRASGIQWDLRKVDPYECYNQFDWKVQWQKEGDSLARYLVRVSEMRESIKIIQQAVEKIPGGPYENLEVRRFKKAKNSEWNDFEYRFLGKKPSPNFELSKQELYVRVEAPKGELGIYLVGDDSLFPWRWKIRPPGFINLQILPQLVKKMKLADIMTILGSIDIIMGEVDR.

It belongs to the complex I 49 kDa subunit family. NDH is composed of at least 16 different subunits, 5 of which are encoded in the nucleus.

It localises to the plastid. It is found in the chloroplast thylakoid membrane. It catalyses the reaction a plastoquinone + NADH + (n+1) H(+)(in) = a plastoquinol + NAD(+) + n H(+)(out). It carries out the reaction a plastoquinone + NADPH + (n+1) H(+)(in) = a plastoquinol + NADP(+) + n H(+)(out). Functionally, NDH shuttles electrons from NAD(P)H:plastoquinone, via FMN and iron-sulfur (Fe-S) centers, to quinones in the photosynthetic chain and possibly in a chloroplast respiratory chain. The immediate electron acceptor for the enzyme in this species is believed to be plastoquinone. Couples the redox reaction to proton translocation, and thus conserves the redox energy in a proton gradient. The polypeptide is NAD(P)H-quinone oxidoreductase subunit H, chloroplastic (Agrostis stolonifera (Creeping bentgrass)).